Here is an 802-residue protein sequence, read N- to C-terminus: Serine/threonine-protein kinase zyg-8 (802 aa).

Residues 1–13 (MPQTSAWQLNDTT) show a composition bias toward polar residues. The segment at 1-102 (MPQTSAWQLN…SAPSTSSAHR (102 aa)) is disordered. The span at 15 to 24 (RPPPPPPPPG) shows a compositional bias: pro residues. Residues 89 to 99 (SPSSSAPSTSS) are compositionally biased toward low complexity. 2 Doublecortin domains span residues 211-298 (KRLR…VDYS) and 340-423 (RIIK…ADDL). The tract at residues 430–470 (HKSVGSGTSSNMRRTSRRSTMPNRNESLRHDRSGSVIPDQD) is disordered. A compositionally biased stretch (low complexity) spans 434–454 (GSGTSSNMRRTSRRSTMPNRN). The Protein kinase domain maps to 482 to 743 (FQLVRLIGDG…AGELLNDEWM (262 aa)). ATP contacts are provided by residues 488–496 (IGDGNTAVV) and Lys-512. Asp-604 acts as the Proton acceptor in catalysis.

This sequence belongs to the protein kinase superfamily. CAMK Ser/Thr protein kinase family. CaMK subfamily. Interacts with tac-1. Expressed in AFD thermosensory neurons. Expressed in cells near the nerve ring, in motor neurons in the ventral nerve cord and in the six touch receptor neurons including ALML/R, PLML/R and AVM and PVM. Expressed in hypodermal and neural tissues and in the germline.

It is found in the cytoplasm. The protein localises to the cytoskeleton. The protein resides in the microtubule organizing center. Its subcellular location is the centrosome. It localises to the spindle. It carries out the reaction L-seryl-[protein] + ATP = O-phospho-L-seryl-[protein] + ADP + H(+). The catalysed reaction is L-threonyl-[protein] + ATP = O-phospho-L-threonyl-[protein] + ADP + H(+). Its function is as follows. Probable kinase. Kinase activity may be involved in positioning of spindle poles in meiosis and mitosis. Plays a role in spindle positioning during asymmetric division of one-cell stage embryos. Affects spindle position by promoting microtubule assembly during anaphase. Plays a role in the assembly and stability of oocyte spindle, perhaps balancing the forces in the spindle and maintaining their morphology during metaphase. Plays a role in cell division and in embryonic viability up until gastrulation. Required for neuronal morphology and polarity and restricting ectopic process outgrowth; probably as a result of a role in maintaining microtubule integrity. Involved in maintaining neuronal microtubule number, length and packing. May promote axonal and synaptic growth. Plays a role in regulating thermotaxis responses in AFD thermosensory neurons. Required for touch sensitivity in adult touch response receptor neurons. This is Serine/threonine-protein kinase zyg-8 from Caenorhabditis elegans.